The following is a 195-amino-acid chain: Proteasome subunit beta 1 (195 aa).

A propeptide spans 1–6 (MEELPA) (removed in mature form; by autocatalysis). T7 acts as the Nucleophile in catalysis.

It belongs to the peptidase T1B family. The 20S proteasome core is composed of 14 alpha and 14 beta subunits that assemble into four stacked heptameric rings, resulting in a barrel-shaped structure. The two inner rings, each composed of seven catalytic beta subunits, are sandwiched by two outer rings, each composed of seven alpha subunits. The catalytic chamber with the active sites is on the inside of the barrel. Has a gated structure, the ends of the cylinder being occluded by the N-termini of the alpha-subunits. Is capped at one or both ends by the proteasome regulatory ATPase, PAN.

The protein resides in the cytoplasm. It catalyses the reaction Cleavage of peptide bonds with very broad specificity.. Its activity is regulated as follows. The formation of the proteasomal ATPase PAN-20S proteasome complex, via the docking of the C-termini of PAN into the intersubunit pockets in the alpha-rings, triggers opening of the gate for substrate entry. Interconversion between the open-gate and close-gate conformations leads to a dynamic regulation of the 20S proteasome proteolysis activity. Its function is as follows. Component of the proteasome core, a large protease complex with broad specificity involved in protein degradation. The polypeptide is Proteasome subunit beta 1 (Sulfolobus acidocaldarius (strain ATCC 33909 / DSM 639 / JCM 8929 / NBRC 15157 / NCIMB 11770)).